The chain runs to 68 residues: Protein transport protein Sec61 subunit gamma (68 aa).

Residues methionine 1 to glutamate 32 lie on the Cytoplasmic side of the membrane. The helical transmembrane segment at phenylalanine 33–isoleucine 61 threads the bilayer. Topologically, residues asparagine 62–serine 68 are extracellular.

This sequence belongs to the SecE/SEC61-gamma family. In terms of assembly, heterotrimeric complex composed of SEC61-alpha, SEC61-beta and SEC61-gamma.

The protein localises to the endoplasmic reticulum membrane. Its function is as follows. Necessary for protein translocation in the endoplasmic reticulum. The polypeptide is Protein transport protein Sec61 subunit gamma (SEC61G) (Gryllotalpa orientalis (Oriental mole cricket)).